We begin with the raw amino-acid sequence, 574 residues long: Isocitrate dehydrogenase kinase/phosphatase (574 aa).

ATP is bound by residues 315–321 and Lys-336; that span reads APGIRGM. Residue Asp-371 is part of the active site.

Belongs to the AceK family.

It localises to the cytoplasm. It carries out the reaction L-seryl-[isocitrate dehydrogenase] + ATP = O-phospho-L-seryl-[isocitrate dehydrogenase] + ADP + H(+). Its function is as follows. Bifunctional enzyme which can phosphorylate or dephosphorylate isocitrate dehydrogenase (IDH) on a specific serine residue. This is a regulatory mechanism which enables bacteria to bypass the Krebs cycle via the glyoxylate shunt in response to the source of carbon. When bacteria are grown on glucose, IDH is fully active and unphosphorylated, but when grown on acetate or ethanol, the activity of IDH declines drastically concomitant with its phosphorylation. The protein is Isocitrate dehydrogenase kinase/phosphatase of Escherichia coli O127:H6 (strain E2348/69 / EPEC).